Consider the following 466-residue polypeptide: Cysteine--tRNA ligase (466 aa).

Cys-33 contacts Zn(2+). A 'HIGH' region motif is present at residues 35–45 (PTVYDFAHIGN). Zn(2+) is bound by residues Cys-221, His-246, and Glu-250. Residues 279–283 (KMSKS) carry the 'KMSKS' region motif. Lys-282 is a binding site for ATP.

It belongs to the class-I aminoacyl-tRNA synthetase family. In terms of assembly, monomer. Requires Zn(2+) as cofactor.

Its subcellular location is the cytoplasm. It catalyses the reaction tRNA(Cys) + L-cysteine + ATP = L-cysteinyl-tRNA(Cys) + AMP + diphosphate. This Sinorhizobium medicae (strain WSM419) (Ensifer medicae) protein is Cysteine--tRNA ligase.